The primary structure comprises 134 residues: Small ribosomal subunit protein uS11 (134 aa).

A disordered region spans residues 1–24 (MATKMAGVKRAGRKRKERKNIERG).

It belongs to the universal ribosomal protein uS11 family. Part of the 30S ribosomal subunit. Interacts with proteins S7 and S18. Binds to IF-3.

Located on the platform of the 30S subunit, it bridges several disparate RNA helices of the 16S rRNA. Forms part of the Shine-Dalgarno cleft in the 70S ribosome. The sequence is that of Small ribosomal subunit protein uS11 from Acetivibrio thermocellus (strain ATCC 27405 / DSM 1237 / JCM 9322 / NBRC 103400 / NCIMB 10682 / NRRL B-4536 / VPI 7372) (Clostridium thermocellum).